The following is a 514-amino-acid chain: Maturase K (514 aa).

It belongs to the intron maturase 2 family. MatK subfamily.

The protein localises to the plastid. Its subcellular location is the chloroplast. Functionally, usually encoded in the trnK tRNA gene intron. Probably assists in splicing its own and other chloroplast group II introns. The polypeptide is Maturase K (Encephalartos altensteinii (Altenstein's bread tree)).